Here is a 1370-residue protein sequence, read N- to C-terminus: DNA-directed RNA polymerase subunit beta (1370 aa).

It belongs to the RNA polymerase beta chain family. In terms of assembly, the RNAP catalytic core consists of 2 alpha, 1 beta, 1 beta' and 1 omega subunit. When a sigma factor is associated with the core the holoenzyme is formed, which can initiate transcription.

It carries out the reaction RNA(n) + a ribonucleoside 5'-triphosphate = RNA(n+1) + diphosphate. Functionally, DNA-dependent RNA polymerase catalyzes the transcription of DNA into RNA using the four ribonucleoside triphosphates as substrates. The sequence is that of DNA-directed RNA polymerase subunit beta from Syntrophobacter fumaroxidans (strain DSM 10017 / MPOB).